The chain runs to 363 residues: MAQTPAFNKPKVELHVHLDGAIKPETILYYGRKRGIALPADTPEELQNIIGMDKPLSLPEFLAKFDYYMPAIAGCREAVKRIAYEFVEMKAKDGVVYVEVRYSPHLLANSKVEPIPWNQAEGDLTPDEVVSLVNQGLQEGERDFGVKVRSILCCMRHQPSWSSEVVELCKKYREQTVVAIDLAGDETIEGSSLFPGHVKAYAEAVKSGVHRTVHAGEVGSANVVKEAVDTLKTERLGHGYHTLEDATLYNRLRQENMHFEVCPWSSYLTGAWKPDTEHPVVRFKNDQVNYSLNTDDPLIFKSTLDTDYQMTKNEMGFTEEEFKRLNINAAKSSFLPEDEKKELLDLLYKAYGMPSPASAEQCL.

Ala-2 carries the post-translational modification N-acetylalanine. Residues His-15 and His-17 each contribute to the Zn(2+) site. Residues His-17 and Asp-19 each contribute to the substrate site. Position 54 is an N6-acetyllysine (Lys-54). Gly-184 serves as a coordination point for substrate. Position 214 (His-214) interacts with Zn(2+). Residue Glu-217 is the Proton donor of the active site. Position 232 is an N6-acetyllysine (Lys-232). Residue Asp-295 coordinates Zn(2+). Position 296 (Asp-296) interacts with substrate.

This sequence belongs to the metallo-dependent hydrolases superfamily. Adenosine and AMP deaminases family. Interacts with DPP4 (via extracellular domain). Interacts with PLG (via Kringle 4 domain); the interaction stimulates PLG activation when in complex with DPP4. It depends on Zn(2+) as a cofactor. Expressed in gastrointestinal tissues (at protein level).

It localises to the cell membrane. The protein localises to the cell junction. The protein resides in the cytoplasmic vesicle lumen. It is found in the cytoplasm. Its subcellular location is the lysosome. The enzyme catalyses adenosine + H2O + H(+) = inosine + NH4(+). The catalysed reaction is 2'-deoxyadenosine + H2O + H(+) = 2'-deoxyinosine + NH4(+). It carries out the reaction cordycepin + H2O + H(+) = 3'-deoxyinosine + NH4(+). In terms of biological role, catalyzes the hydrolytic deamination of adenosine and 2-deoxyadenosine. Plays an important role in purine metabolism and in adenosine homeostasis. Modulates signaling by extracellular adenosine, and so contributes indirectly to cellular signaling events. Acts as a positive regulator of T-cell coactivation, by binding DPP4. Its interaction with DPP4 regulates lymphocyte-epithelial cell adhesion. Enhances dendritic cell immunogenicity by affecting dendritic cell costimulatory molecule expression and cytokines and chemokines secretion. Enhances CD4+ T-cell differentiation and proliferation. Acts as a positive modulator of adenosine receptors ADORA1 and ADORA2A, by enhancing their ligand affinity via conformational change. Stimulates plasminogen activation. Plays a role in male fertility. Plays a protective role in early postimplantation embryonic development. Also responsible for the deamination of cordycepin (3'-deoxyadenosine), a fungal natural product that shows antitumor, antibacterial, antifungal, antivirus, and immune regulation properties. The chain is Adenosine deaminase (ADA) from Bos taurus (Bovine).